Here is a 173-residue protein sequence, read N- to C-terminus: Protein tyrosine phosphatase type IVA 3 (173 aa).

A Tyrosine-protein phosphatase domain is found at 8-161 (APVEVSYKNM…YRPKQRLRFK (154 aa)). A disulfide bridge connects residues C49 and C104. D72 acts as the Proton donor in catalysis. The active-site Phosphocysteine intermediate is C104. Residue R110 coordinates substrate. C170 bears the Cysteine methyl ester mark. C170 carries S-farnesyl cysteine lipidation. A propeptide spans 171–173 (CIM) (removed in mature form).

Belongs to the protein-tyrosine phosphatase family. As to quaternary structure, interacts with tubulin. In terms of processing, farnesylated. Farnesylation is required for membrane targeting. Unfarnesylated forms are shifted into the nucleus.

The protein localises to the cell membrane. It localises to the early endosome. It catalyses the reaction O-phospho-L-tyrosyl-[protein] + H2O = L-tyrosyl-[protein] + phosphate. Its activity is regulated as follows. Inhibited by sodium orthovanadate and peroxovanadium compounds, and by pentamidine. In terms of biological role, protein tyrosine phosphatase which stimulates progression from G1 into S phase during mitosis. Enhances cell proliferation, cell motility and invasive activity, and promotes cancer metastasis. May be involved in the progression of cardiac hypertrophy by inhibiting intracellular calcium mobilization in response to angiotensin II. The sequence is that of Protein tyrosine phosphatase type IVA 3 (PTP4A3) from Bos taurus (Bovine).